Consider the following 297-residue polypeptide: ClpXP adapter protein SpxH (297 aa).

It belongs to the SpxH family. In terms of assembly, interacts with Spx.

It is found in the cytoplasm. In terms of biological role, adapter protein required for efficient degradation of Spx by ClpXP under non-stress conditions. Interaction with Spx stabilizes Spx and exposes the C-terminus of Spx for recognition and proteolysis by ClpXP. The sequence is that of ClpXP adapter protein SpxH from Bacillus cereus (strain ATCC 14579 / DSM 31 / CCUG 7414 / JCM 2152 / NBRC 15305 / NCIMB 9373 / NCTC 2599 / NRRL B-3711).